Here is a 414-residue protein sequence, read N- to C-terminus: DNA primase small subunit PriS (414 aa).

Catalysis depends on residues D98, D100, and D312.

The protein belongs to the eukaryotic-type primase small subunit family. As to quaternary structure, heterodimer of a small subunit (PriS) and a large subunit (PriL). The cofactor is Mg(2+). Mn(2+) is required as a cofactor.

Its function is as follows. Catalytic subunit of DNA primase, an RNA polymerase that catalyzes the synthesis of short RNA molecules used as primers for DNA polymerase during DNA replication. The small subunit contains the primase catalytic core and has DNA synthesis activity on its own. Binding to the large subunit stabilizes and modulates the activity, increasing the rate of DNA synthesis while decreasing the length of the DNA fragments, and conferring RNA synthesis capability. The DNA polymerase activity may enable DNA primase to also catalyze primer extension after primer synthesis. May also play a role in DNA repair. This is DNA primase small subunit PriS from Methanosarcina acetivorans (strain ATCC 35395 / DSM 2834 / JCM 12185 / C2A).